A 329-amino-acid chain; its full sequence is 4-hydroxythreonine-4-phosphate dehydrogenase (329 aa).

2 residues coordinate substrate: histidine 136 and threonine 137. A divalent metal cation contacts are provided by histidine 166, histidine 211, and histidine 266. Substrate is bound by residues lysine 274, asparagine 283, and arginine 292.

It belongs to the PdxA family. Homodimer. Zn(2+) is required as a cofactor. Mg(2+) serves as cofactor. Requires Co(2+) as cofactor.

It is found in the cytoplasm. It carries out the reaction 4-(phosphooxy)-L-threonine + NAD(+) = 3-amino-2-oxopropyl phosphate + CO2 + NADH. Its pathway is cofactor biosynthesis; pyridoxine 5'-phosphate biosynthesis; pyridoxine 5'-phosphate from D-erythrose 4-phosphate: step 4/5. In terms of biological role, catalyzes the NAD(P)-dependent oxidation of 4-(phosphooxy)-L-threonine (HTP) into 2-amino-3-oxo-4-(phosphooxy)butyric acid which spontaneously decarboxylates to form 3-amino-2-oxopropyl phosphate (AHAP). This chain is 4-hydroxythreonine-4-phosphate dehydrogenase, found in Escherichia coli O17:K52:H18 (strain UMN026 / ExPEC).